The sequence spans 95 residues: Co-chaperonin GroES (95 aa).

The protein belongs to the GroES chaperonin family. As to quaternary structure, heptamer of 7 subunits arranged in a ring. Interacts with the chaperonin GroEL.

The protein resides in the cytoplasm. In terms of biological role, together with the chaperonin GroEL, plays an essential role in assisting protein folding. The GroEL-GroES system forms a nano-cage that allows encapsulation of the non-native substrate proteins and provides a physical environment optimized to promote and accelerate protein folding. GroES binds to the apical surface of the GroEL ring, thereby capping the opening of the GroEL channel. This Chlorobium luteolum (strain DSM 273 / BCRC 81028 / 2530) (Pelodictyon luteolum) protein is Co-chaperonin GroES.